Reading from the N-terminus, the 258-residue chain is MLKTRIIPCLDVKDGRVVKGVQFLELRDAGDPVESAKAYDAAGADELCFLDITASHEDRGTLLDVVSRTAEACFMPLTVGGGVRTVSDVRTLLLAGADKVGINTAAVKNPDFVAEAAEKFGDQCIVVAIDAKRVSGPHEAARWEIFTHGGRNPTGLDAVEFARKVSERGAGELLVTSMDKDGTRSGYDLALTRAIADAVKVPVIASGGVGGLDDLVAGVRDGGASAVLAASIFHFGQHTVAEAKSHMAAAGLAMRLDP.

Active-site residues include D11 and D130.

Belongs to the HisA/HisF family. Heterodimer of HisH and HisF.

Its subcellular location is the cytoplasm. The catalysed reaction is 5-[(5-phospho-1-deoxy-D-ribulos-1-ylimino)methylamino]-1-(5-phospho-beta-D-ribosyl)imidazole-4-carboxamide + L-glutamine = D-erythro-1-(imidazol-4-yl)glycerol 3-phosphate + 5-amino-1-(5-phospho-beta-D-ribosyl)imidazole-4-carboxamide + L-glutamate + H(+). It functions in the pathway amino-acid biosynthesis; L-histidine biosynthesis; L-histidine from 5-phospho-alpha-D-ribose 1-diphosphate: step 5/9. IGPS catalyzes the conversion of PRFAR and glutamine to IGP, AICAR and glutamate. The HisF subunit catalyzes the cyclization activity that produces IGP and AICAR from PRFAR using the ammonia provided by the HisH subunit. This is Imidazole glycerol phosphate synthase subunit HisF from Methylorubrum populi (strain ATCC BAA-705 / NCIMB 13946 / BJ001) (Methylobacterium populi).